The sequence spans 734 residues: Paralemmin-3 (734 aa).

Residues 19 to 64 adopt a coiled-coil conformation; it reads SALYRQRLEVIAEKRRLQEEIGAARRELEEEKLRVERLKRKSLRER. Disordered stretches follow at residues 62 to 100 and 114 to 217; these read RERW…RNLE and QSAS…LGVS. The span at 73–82 shows a compositional bias: basic and acidic residues; that stretch reads GPERPEEPAS. Positions 90–116 form a coiled coil; it reads GQAQARIRNLEDSLFSLQSQLQLLQSA. Phosphoserine occurs at positions 139, 158, 167, 170, and 172. The segment covering 186–198 has biased composition (polar residues); the sequence is RPSTEAIGTSSEA. Position 270 is a phosphoserine (Ser-270). Residues 297–308 show a composition bias toward basic and acidic residues; it reads DVTGESGRDAEA. Disordered regions lie at residues 297–347, 374–400, and 413–709; these read DVTG…PGVE, PQGA…SWEV, and EKGR…YAPA. The residue at position 311 (Thr-311) is a Phosphothreonine. Residues 315–336 show a composition bias toward basic and acidic residues; that stretch reads RLQEQFEAETCRKEEGASRDSL. 2 positions are modified to phosphoserine: Ser-332 and Ser-335. Composition is skewed to basic and acidic residues over residues 413–427, 435–452, 462–484, 494–531, 540–561, 571–582, 589–607, and 630–647; these read EKGR…REDG, TQGR…KDSE, DEEK…KGGE, LVTE…ESKT, IGDK…EKTG, EGSKKLLDREAD, EVDK…EQGK, and DEPR…KQEG. Ser-451 carries the phosphoserine modification. Ser-601 is subject to Phosphoserine. Phosphoserine is present on Ser-721. S-palmitoyl cysteine attachment occurs at residues Cys-728 and Cys-730. Residue Cys-731 is modified to Cysteine methyl ester. Residue Cys-731 is the site of S-farnesyl cysteine attachment. Positions 732-734 are cleaved as a propeptide — removed in mature form; that stretch reads VVM.

This sequence belongs to the paralemmin family. As to quaternary structure, interacts with SIGIRR. In terms of processing, palmitoylated on Cys-728 and Cys-730 and prenylated on Cys-731; which is required for membrane association.

It localises to the cytoplasm. The protein localises to the cell membrane. ATP-binding protein, which may act as a adapter in the Toll-like receptor (TLR) signaling. This is Paralemmin-3 (Palm3) from Mus musculus (Mouse).